An 827-amino-acid chain; its full sequence is Transcription factor SOX-6 (827 aa).

Polar residues predominate over residues 1–10; sequence MSSKQATSPF. The disordered stretch occupies residues 1-51; it reads MSSKQATSPFACTADGEEAMTQDLTSREKEEGSDQHPASHLPLHPIMHNKP. A compositionally biased stretch (basic and acidic residues) spans 25 to 34; it reads TSREKEEGSD. Thr-119 is modified (phosphothreonine). The stretch at 184–262 forms a coiled coil; sequence LAEKERQLST…LLQQQIQVQG (79 aa). Disordered regions lie at residues 334 to 361 and 379 to 470; these read QINPRLKGISDRFGRNLDPSEHGGGHSY and VSPG…PIGG. Over residues 341–357 the composition is skewed to basic and acidic residues; it reads GISDRFGRNLDPSEHGG. Ser-399 is subject to Phosphoserine. Thr-401 carries the post-translational modification Phosphothreonine. Glycyl lysine isopeptide (Lys-Gly) (interchain with G-Cter in SUMO) cross-links involve residues Lys-404 and Lys-417. Composition is skewed to polar residues over residues 421-431 and 439-461; these read TAQPLNLSSRP and SPTSPTQNLFPASKTSPVNLPNK. Residues Ser-439 and Ser-442 each carry the phosphoserine modification. The HMG box DNA-binding region spans 620–688; it reads IKRPMNAFMV…IHLEKYPNYK (69 aa). Disordered stretches follow at residues 752 to 772 and 786 to 827; these read TPSPQMTSDCSSTSASPEPSL and ASLA…VSAN. The span at 795–808 shows a compositional bias: acidic residues; that stretch reads NGEDEMEAYDDYED.

As to quaternary structure, homodimer. Interacts with DAZAP2. May interact with CENPK. In terms of processing, sumoylation inhibits the transcriptional activity. In terms of tissue distribution, highly expressed in testis.

The protein localises to the nucleus. It is found in the cytoplasm. Functionally, transcription factor that plays a key role in several developmental processes, including neurogenesis, chondrocytes differentiation and cartilage formation. Specifically binds the 5'-AACAAT-3' DNA motif present in enhancers and super-enhancers and promotes expression of genes important for chondrogenesis. Required for overt chondrogenesis when condensed prechondrocytes differentiate into early stage chondrocytes: SOX5 and SOX6 cooperatively bind with SOX9 on active enhancers and super-enhancers associated with cartilage-specific genes, and thereby potentiate SOX9's ability to transactivate. Not involved in precartilaginous condensation, the first step in chondrogenesis, during which skeletal progenitors differentiate into prechondrocytes. Together with SOX5, required to form and maintain a pool of highly proliferating chondroblasts between epiphyses and metaphyses, to form columnar chondroblasts, delay chondrocyte prehypertrophy but promote hypertrophy, and to delay terminal differentiation of chondrocytes on contact with ossification fronts. Binds to the proximal promoter region of the myelin protein MPZ gene, and is thereby involved in the differentiation of oligodendroglia in the developing spinal tube. Binds to the gene promoter of MBP and acts as a transcriptional repressor. The protein is Transcription factor SOX-6 of Mus musculus (Mouse).